Here is a 282-residue protein sequence, read N- to C-terminus: MKLLRYGPSGQEKPGILDSAGRIRDLSAHVPDLAGDVLSDAGLARLRAIDPATLPLVSGEPRIGACVGHVGKFIGIGLNYADHAAEAGMPVPKEPVVFGKWTSSICGPNDGIDIPKGSVKTDWEVELGVVIGAKCKDVDEARALDYVAGYCVVNDVSEREWQIERGGQWDKGKGFDTFGPIGPWLVTRDEVPDPQRLDLWLEIDGHRYQNGNTRTMVFTVAQLVAYLSTCMTLQPGDVITTGTPPGVGMGVKPSPVFLKAGQTVRLGIEGLGEQLQRTRNAQ.

The Mg(2+) site is built by Glu-124, Glu-126, and Asp-155.

This sequence belongs to the FAH family. It depends on Mg(2+) as a cofactor.

The chain is Putative hydrolase Bcenmc03_4750 from Burkholderia orbicola (strain MC0-3).